Consider the following 250-residue polypeptide: Uracil-DNA glycosylase (250 aa).

Asp78 acts as the Proton acceptor in catalysis. Positions 228–250 (RGQKPVDWSGEQNNASRQGEFAL) are disordered.

It belongs to the uracil-DNA glycosylase (UDG) superfamily. UNG family.

The protein localises to the cytoplasm. The enzyme catalyses Hydrolyzes single-stranded DNA or mismatched double-stranded DNA and polynucleotides, releasing free uracil.. In terms of biological role, excises uracil residues from the DNA which can arise as a result of misincorporation of dUMP residues by DNA polymerase or due to deamination of cytosine. This chain is Uracil-DNA glycosylase, found in Bordetella pertussis (strain Tohama I / ATCC BAA-589 / NCTC 13251).